A 377-amino-acid polypeptide reads, in one-letter code: Succinyl-diaminopimelate desuccinylase (377 aa).

Histidine 68 lines the Zn(2+) pocket. Residue aspartate 70 is part of the active site. Aspartate 101 is a Zn(2+) binding site. Residue glutamate 135 is the Proton acceptor of the active site. Zn(2+) is bound by residues glutamate 136, glutamate 164, and histidine 350.

The protein belongs to the peptidase M20A family. DapE subfamily. In terms of assembly, homodimer. Requires Zn(2+) as cofactor. The cofactor is Co(2+).

It carries out the reaction N-succinyl-(2S,6S)-2,6-diaminopimelate + H2O = (2S,6S)-2,6-diaminopimelate + succinate. The protein operates within amino-acid biosynthesis; L-lysine biosynthesis via DAP pathway; LL-2,6-diaminopimelate from (S)-tetrahydrodipicolinate (succinylase route): step 3/3. Catalyzes the hydrolysis of N-succinyl-L,L-diaminopimelic acid (SDAP), forming succinate and LL-2,6-diaminopimelate (DAP), an intermediate involved in the bacterial biosynthesis of lysine and meso-diaminopimelic acid, an essential component of bacterial cell walls. This chain is Succinyl-diaminopimelate desuccinylase, found in Vibrio cholerae serotype O1 (strain ATCC 39541 / Classical Ogawa 395 / O395).